A 528-amino-acid chain; its full sequence is Chromosomal replication initiator protein DnaA (528 aa).

A domain I, interacts with DnaA modulators region spans residues 1-104 (MNDDPNALAR…PVDDEPESEA (104 aa)). The tract at residues 93–159 (AAPVDDEPES…DFEEVDDDSE (67 aa)) is disordered. The segment covering 104 to 123 (APSRERRPDPEPVHTPRHLE) has biased composition (basic and acidic residues). Positions 105–187 (PSRERRPDPE…GPAPAATGGN (83 aa)) are domain II. Acidic residues predominate over residues 149 to 159 (TDFEEVDDDSE). Residues 188–404 (SLNAKYTFDT…GALIRVTAFA (217 aa)) form a domain III, AAA+ region region. Positions 232, 234, 235, and 236 each coordinate ATP. Residues 405-528 (SLNRQPLDLT…TARIKQRSKR (124 aa)) form a domain IV, binds dsDNA region.

The protein belongs to the DnaA family. Oligomerizes as a right-handed, spiral filament on DNA at oriC.

The protein resides in the cytoplasm. Functionally, plays an essential role in the initiation and regulation of chromosomal replication. ATP-DnaA binds to the origin of replication (oriC) to initiate formation of the DNA replication initiation complex once per cell cycle. Binds the DnaA box (a 9 base pair repeat at the origin) and separates the double-stranded (ds)DNA. Forms a right-handed helical filament on oriC DNA; dsDNA binds to the exterior of the filament while single-stranded (ss)DNA is stabiized in the filament's interior. The ATP-DnaA-oriC complex binds and stabilizes one strand of the AT-rich DNA unwinding element (DUE), permitting loading of DNA polymerase. After initiation quickly degrades to an ADP-DnaA complex that is not apt for DNA replication. Binds acidic phospholipids. The protein is Chromosomal replication initiator protein DnaA of Rhodococcus opacus (strain B4).